The chain runs to 710 residues: Denticleless protein homolog A (710 aa).

3 WD repeats span residues 47–89 (GMPV…MQRL), 96–135 (AHTNAVFDIAWVPGEHKLVTASGDQTAKLWDVMAGELIGE), and 138–178 (GHQC…KDGF). Positions 168 to 171 (WDTR) match the DDB1-binding motif motif. A Nuclear localization signal motif is present at residues 197-204 (PSKMKKRK). WD repeat units lie at residues 215–254 (DSQQSVTVVIFQDEYTIISAGAVDGVVKIWDLRKNYSAYR), 270–309 (TRKLGYSSLVLDPTGTNLFASCTDDNVYMFNATGLKTDPV), 314–355 (GHQN…AAPV), and 359–398 (GHCQEVTSVAWCQSDFTKIATCSDDNTVRVWRLKRSCEDS). The DDB1-binding motif motif lies at 244 to 247 (WDLR). Disordered regions lie at residues 428–534 (GKPS…VSSA) and 652–698 (ALGH…PGSM). Over residues 430–450 (PSVMSSSSLTSSPTPASCAPS) the composition is skewed to low complexity. Composition is skewed to polar residues over residues 504-516 (TPKSSTRTDTKTP) and 659-690 (SSPQNKASGSPSSRTSTTKKQQPRNAPNSPVS).

This sequence belongs to the WD repeat cdt2 family. Component of the DCX(DTL) E3 ubiquitin ligase complex, at least composed of cul4 (cul4a or cul4b), ddb1, dtl/cdt2 and rbx1.

The protein localises to the nucleus. The protein resides in the cytoplasm. Its subcellular location is the cytoskeleton. It is found in the microtubule organizing center. It localises to the centrosome. The protein localises to the chromosome. The protein operates within protein modification; protein ubiquitination. In terms of biological role, substrate-specific adapter of a DCX (DDB1-CUL4-X-box) E3 ubiquitin-protein ligase complex required for cell cycle control, DNA damage response and translesion DNA synthesis. The DCX(DTL) complex, also named CRL4(CDT2) complex, mediates the polyubiquitination and subsequent degradation of CDT1, CDKN1A/p21(CIP1), KMT5A and SDE2. CDT1 degradation in response to DNA damage is necessary to ensure proper cell cycle regulation of DNA replication. CDKN1A/p21(CIP1) degradation during S phase or following UV irradiation is essential to control replication licensing. KMT5A degradation is also important for a proper regulation of mechanisms such as TGF-beta signaling, cell cycle progression, DNA repair and cell migration. Most substrates require their interaction with PCNA for their polyubiquitination: substrates interact with PCNA via their PIP-box, and those containing the 'K+4' motif in the PIP box, recruit the DCX(DTL) complex, leading to their degradation. In undamaged proliferating cells, the DCX(DTL) complex also promotes the 'Lys-164' monoubiquitination of PCNA, thereby being involved in PCNA-dependent translesion DNA synthesis. May play a role in the regulation of the circadian clock. This Xenopus laevis (African clawed frog) protein is Denticleless protein homolog A (dtl-a).